Reading from the N-terminus, the 333-residue chain is tRNA N6-adenosine threonylcarbamoyltransferase (333 aa).

Residues histidine 108 and histidine 112 each contribute to the Fe cation site. Residues 129–133 (LVSGG), aspartate 161, glutamate 178, and serine 258 contribute to the substrate site. Fe cation is bound at residue aspartate 286.

This sequence belongs to the KAE1 / TsaD family. The cofactor is Fe(2+).

It is found in the cytoplasm. It catalyses the reaction L-threonylcarbamoyladenylate + adenosine(37) in tRNA = N(6)-L-threonylcarbamoyladenosine(37) in tRNA + AMP + H(+). Required for the formation of a threonylcarbamoyl group on adenosine at position 37 (t(6)A37) in tRNAs that read codons beginning with adenine. Is probably involved in the transfer of the threonylcarbamoyl moiety of threonylcarbamoyl-AMP (TC-AMP) to the N6 group of A37. The protein is tRNA N6-adenosine threonylcarbamoyltransferase of Pyrobaculum islandicum (strain DSM 4184 / JCM 9189 / GEO3).